The chain runs to 126 residues: Large ribosomal subunit protein bL12 (126 aa).

It belongs to the bacterial ribosomal protein bL12 family. In terms of assembly, homodimer. Part of the ribosomal stalk of the 50S ribosomal subunit. Forms a multimeric L10(L12)X complex, where L10 forms an elongated spine to which 2 to 4 L12 dimers bind in a sequential fashion. Binds GTP-bound translation factors.

Its function is as follows. Forms part of the ribosomal stalk which helps the ribosome interact with GTP-bound translation factors. Is thus essential for accurate translation. This is Large ribosomal subunit protein bL12 from Citrifermentans bemidjiense (strain ATCC BAA-1014 / DSM 16622 / JCM 12645 / Bem) (Geobacter bemidjiensis).